The sequence spans 400 residues: MAKGVFERTKPHINVGTIGHVDHGKTTLTAAITKVLAKHVPDDPANKEVAFEQIDNAPEERQRGITIATSHQEYATKNRHYAHVDCPGHADYVKNMITGAAQMDGAILVVSAADGPMPQTREHILLARQVGVPYIVVYLNKADMVDDPELLELVEMEVRELLSEYEFPGDEVPVVVGSALKALEGDEGELGEQSILKLLEALDEYIPEPKRDIDKPFLLAVEDVFSIQGRGTVATGRVEQGKLRLNEEVEIVGIRPTRKTVVTGIEMFNKSMQEAQAGDNIGVLLRGIKRDEIERGQVLAAPGSITPHTRFKAEVYVLSKEEGGRHTPFFSHYRPQFYFRTTDVTGEIFLEEGVEMVMPGDNTVMEVQLISPIAMDEGLNFAIREGGRTVGAGVVTQIIE.

In terms of domain architecture, tr-type G spans 10–210 (KPHINVGTIG…ALDEYIPEPK (201 aa)). A G1 region spans residues 19 to 26 (GHVDHGKT). GTP is bound at residue 19-26 (GHVDHGKT). Position 26 (Thr26) interacts with Mg(2+). The segment at 64–68 (GITIA) is G2. Positions 85 to 88 (DCPG) are G3. Residues 85–89 (DCPGH) and 140–143 (NKAD) each bind GTP. A G4 region spans residues 140–143 (NKAD). A G5 region spans residues 178–180 (SAL).

It belongs to the TRAFAC class translation factor GTPase superfamily. Classic translation factor GTPase family. EF-Tu/EF-1A subfamily. In terms of assembly, monomer.

It localises to the cytoplasm. The enzyme catalyses GTP + H2O = GDP + phosphate + H(+). Its function is as follows. GTP hydrolase that promotes the GTP-dependent binding of aminoacyl-tRNA to the A-site of ribosomes during protein biosynthesis. The polypeptide is Elongation factor Tu (Rubrobacter xylanophilus (strain DSM 9941 / JCM 11954 / NBRC 16129 / PRD-1)).